The sequence spans 691 residues: Inactive TPR repeat-containing thioredoxin TTL3 (691 aa).

2 disordered regions span residues 1 to 153 (MSHS…AVSP) and 174 to 209 (MASRTSSRTETLCTGTGNYGHGNVVRSGGGGGTSGK). Ser-8 carries the phosphoserine modification. Residues 19-39 (RFRDLQRNDDDVNKPDFRELD) show a composition bias toward basic and acidic residues. A phosphoserine mark is found at Ser-42 and Ser-45. The segment covering 51 to 79 (GSASSSAAATPTSSSGSSGSASGKPSVSS) has biased composition (low complexity). The span at 83 to 93 (KRLDDAYKSHS) shows a compositional bias: basic and acidic residues. Polar residues-rich tracts occupy residues 94 to 108 (GELSSPGSGMPTTTR), 118 to 140 (SSTGTPLIFSGSSFTSATSHTSP), and 175 to 189 (ASRTSSRTETLCTGT). TPR repeat units follow at residues 220 to 253 (PEELKRMGNDMYRRGSFSEALSLYDRAILISPGN), 255 to 287 (AYRSNRAAALTALRRLGEAVKECLEAVRIDPSY), 289 to 321 (RAHQRLASLYLRLGEAENARRHICFSGQCPDQA), 327 to 362 (QTLEKHLRRCWEARKIGDWKTAIKETDAAIANGADS), 412 to 445 (AYVLCIQAQVDMALGRFENAVVKAERAAMLDQTN), 458 to 491 (VVRARTRGNELFSSGRFSEACVAYGDGLKQDDSN), 492 to 525 (SVLYCNRAACWYKLGLWEKSVEDCNHALKSQPSY), and 527 to 559 (KALLRRAASYGKLGRWEDAVKDYEFLRRELPGD). The Thioredoxin domain maps to 596-683 (DKFKKSVALP…MVCPSHQFLE (88 aa)).

As to quaternary structure, interacts with BRL2. Expressed in embryos and organ primordia in shoot and root. In primary and cauline leaves and petals, is expressed in hydathodes, guard cells, petiole cells and cells associated with differentiating vascular bundles.

In terms of biological role, involved in osmotic and salt stress tolerance. May play a role in the control of meristematic cell size during osmotic stress. May function as an adapter protein for BRL2 and may be required for signaling affecting leaf vascular tissue pattern formation. This Arabidopsis thaliana (Mouse-ear cress) protein is Inactive TPR repeat-containing thioredoxin TTL3.